Here is a 248-residue protein sequence, read N- to C-terminus: Ribosomal RNA small subunit methyltransferase G (248 aa).

The interval 1-23 is disordered; it reads MFHVKHVGPVEPAAGDPEVPPVA. S-adenosyl-L-methionine contacts are provided by residues G93, L98, 143–144, and R161; that span reads AE. The tract at residues 226-248 is disordered; that stretch reads VVSARRAKPPHPKSARTGKAGTR. Residues 230 to 248 show a composition bias toward basic residues; that stretch reads RRAKPPHPKSARTGKAGTR.

The protein belongs to the methyltransferase superfamily. RNA methyltransferase RsmG family.

It is found in the cytoplasm. Its function is as follows. Specifically methylates the N7 position of guanine in position 518 of 16S rRNA. The polypeptide is Ribosomal RNA small subunit methyltransferase G (Mycolicibacterium paratuberculosis (strain ATCC BAA-968 / K-10) (Mycobacterium paratuberculosis)).